Here is a 264-residue protein sequence, read N- to C-terminus: Probable aquaporin TIP3-1 (264 aa).

2 helical membrane-spanning segments follow: residues 28 to 48 (AAIS…GSIL) and 62 to 82 (GLVA…AVAV). Positions 90-92 (NPA) match the NPA 1 motif. Helical transmembrane passes span 105–125 (LIRA…ATLL), 149–169 (AVLL…ATVI), and 176–196 (VGTI…LAGG). The short motif at 204 to 206 (NPA) is the NPA 2 element. The chain crosses the membrane as a helical span at residues 224–244 (YWLGPFVGAGLAGLLYEYLVI).

It belongs to the MIP/aquaporin (TC 1.A.8) family. TIP (TC 1.A.8.10) subfamily. Expressed in leaves and at lower levels in roots.

The protein resides in the vacuole membrane. Functionally, aquaporins facilitate the transport of water and small neutral solutes across cell membranes. May be involved in transport from the vacuolar compartment to the cytoplasm. The sequence is that of Probable aquaporin TIP3-1 (TIP3-1) from Oryza sativa subsp. japonica (Rice).